The primary structure comprises 73 residues: NAD(P)H-quinone oxidoreductase subunit L (73 aa).

Transmembrane regions (helical) follow at residues 6–26 (SLIGLTYAGLAVLYLLVLPLL) and 44–64 (VLMFFLVLFFFPGMVLLAPFM).

The protein belongs to the complex I NdhL subunit family. In terms of assembly, NDH-1 can be composed of about 15 different subunits; different subcomplexes with different compositions have been identified which probably have different functions.

Its subcellular location is the cellular thylakoid membrane. The enzyme catalyses a plastoquinone + NADH + (n+1) H(+)(in) = a plastoquinol + NAD(+) + n H(+)(out). It catalyses the reaction a plastoquinone + NADPH + (n+1) H(+)(in) = a plastoquinol + NADP(+) + n H(+)(out). Functionally, NDH-1 shuttles electrons from an unknown electron donor, via FMN and iron-sulfur (Fe-S) centers, to quinones in the respiratory and/or the photosynthetic chain. The immediate electron acceptor for the enzyme in this species is believed to be plastoquinone. Couples the redox reaction to proton translocation, and thus conserves the redox energy in a proton gradient. Cyanobacterial NDH-1 also plays a role in inorganic carbon-concentration. The polypeptide is NAD(P)H-quinone oxidoreductase subunit L (Synechococcus sp. (strain JA-2-3B'a(2-13)) (Cyanobacteria bacterium Yellowstone B-Prime)).